Consider the following 163-residue polypeptide: MDWILPIAGIIAAIAFLILCIGIVAVLNSVKKNLDYVAKTLDGVEGQVQGITRETTDLLHKVNRLTEDIQGKVDRLNSVVDAVKGIGDSVQTLNSSVDRVTNSITHNISQNEDKISQVVQWSNVAMEIADKWQNRHYRRGSANYKANNVATDANHSYTSRVDK.

The chain crosses the membrane as a helical span at residues 7–27; sequence IAGIIAAIAFLILCIGIVAVL.

The protein belongs to the UPF0478 family.

It localises to the cell membrane. The chain is UPF0478 protein SAB1599c from Staphylococcus aureus (strain bovine RF122 / ET3-1).